The chain runs to 380 residues: Cytochrome b (380 aa).

4 helical membrane passes run 34–54, 78–99, 114–134, and 179–199; these read FGSLLGICLATQILTGLLLAM, WLIRNLHANGASLFFICIYMHI, WNTGIILLLTLMATAFVGYVL, and FFALHFLLPFLIAGLTLIHLT. Heme b is bound by residues His-84 and His-98. Residues His-183 and His-197 each contribute to the heme b site. His-202 is a binding site for a ubiquinone. 4 helical membrane-spanning segments follow: residues 227-247, 289-309, 321-341, and 348-368; these read LKDILGFMLMYLPLMTLALFT, LGGVLALAASVLILFLSPLLH, LSQSLFWLLVTNLLILTWVGS, and FIIIGQLASLSYFTTLLILLP.

It belongs to the cytochrome b family. The cytochrome bc1 complex contains 11 subunits: 3 respiratory subunits (MT-CYB, CYC1 and UQCRFS1), 2 core proteins (UQCRC1 and UQCRC2) and 6 low-molecular weight proteins (UQCRH/QCR6, UQCRB/QCR7, UQCRQ/QCR8, UQCR10/QCR9, UQCR11/QCR10 and a cleavage product of UQCRFS1). This cytochrome bc1 complex then forms a dimer. The cofactor is heme b.

It localises to the mitochondrion inner membrane. Functionally, component of the ubiquinol-cytochrome c reductase complex (complex III or cytochrome b-c1 complex) that is part of the mitochondrial respiratory chain. The b-c1 complex mediates electron transfer from ubiquinol to cytochrome c. Contributes to the generation of a proton gradient across the mitochondrial membrane that is then used for ATP synthesis. In Falco peregrinus (Peregrine falcon), this protein is Cytochrome b (MT-CYB).